The following is a 302-amino-acid chain: Sulfate adenylyltransferase subunit 2 (302 aa).

It belongs to the PAPS reductase family. CysD subfamily. Heterodimer composed of CysD, the smaller subunit, and CysN.

It catalyses the reaction sulfate + ATP + H(+) = adenosine 5'-phosphosulfate + diphosphate. It functions in the pathway sulfur metabolism; hydrogen sulfide biosynthesis; sulfite from sulfate: step 1/3. Functionally, with CysN forms the ATP sulfurylase (ATPS) that catalyzes the adenylation of sulfate producing adenosine 5'-phosphosulfate (APS) and diphosphate, the first enzymatic step in sulfur assimilation pathway. APS synthesis involves the formation of a high-energy phosphoric-sulfuric acid anhydride bond driven by GTP hydrolysis by CysN coupled to ATP hydrolysis by CysD. The polypeptide is Sulfate adenylyltransferase subunit 2 (Salmonella schwarzengrund (strain CVM19633)).